The following is a 222-amino-acid chain: UPF0502 protein Lcho_2066 (222 aa).

Belongs to the UPF0502 family.

This chain is UPF0502 protein Lcho_2066, found in Leptothrix cholodnii (strain ATCC 51168 / LMG 8142 / SP-6) (Leptothrix discophora (strain SP-6)).